The following is a 574-amino-acid chain: ESX-1 secretion system protein EccA1 (574 aa).

335-342 serves as a coordination point for ATP; it reads GPPGTGKT.

The protein belongs to the CbxX/CfxQ family. Part of the ESX-1 / type VII secretion system (T7SS), which is composed of cytosolic and membrane components.

The protein localises to the cytoplasm. Functionally, part of the ESX-1 / type VII specialized secretion system (T7SS), which exports several proteins including EsxA and EsxB. Plays a role in DNA conjugation, in both donor and recipient strains. EccA1 exhibits ATPase activity and may provide energy for the export of ESX-1 substrates. The polypeptide is ESX-1 secretion system protein EccA1 (Mycolicibacterium smegmatis (strain ATCC 700084 / mc(2)155) (Mycobacterium smegmatis)).